The sequence spans 373 residues: 3-dehydroquinate synthase (373 aa).

NAD(+) contacts are provided by residues 67 to 72 (EGEETK), 101 to 105 (GVILD), 125 to 126 (TT), Lys138, and Lys147. 3 residues coordinate Zn(2+): Glu180, His240, and His256.

The protein belongs to the sugar phosphate cyclases superfamily. Dehydroquinate synthase family. Requires NAD(+) as cofactor. Co(2+) is required as a cofactor. Zn(2+) serves as cofactor.

Its subcellular location is the cytoplasm. It carries out the reaction 7-phospho-2-dehydro-3-deoxy-D-arabino-heptonate = 3-dehydroquinate + phosphate. It participates in metabolic intermediate biosynthesis; chorismate biosynthesis; chorismate from D-erythrose 4-phosphate and phosphoenolpyruvate: step 2/7. In terms of biological role, catalyzes the conversion of 3-deoxy-D-arabino-heptulosonate 7-phosphate (DAHP) to dehydroquinate (DHQ). The chain is 3-dehydroquinate synthase from Chlamydia trachomatis serovar A (strain ATCC VR-571B / DSM 19440 / HAR-13).